The following is a 91-amino-acid chain: Large ribosomal subunit protein eL34 (91 aa).

Residues 48 to 71 (RGRPVEMRKLPKTKKRPERPYPHL) are disordered.

It belongs to the eukaryotic ribosomal protein eL34 family.

The polypeptide is Large ribosomal subunit protein eL34 (rpl34e) (Pyrococcus abyssi (strain GE5 / Orsay)).